Consider the following 207-residue polypeptide: BTB/POZ domain-containing protein At1g01640 (207 aa).

The BTB domain maps to 24–94; it reads TDVLVKPGEE…LYSGNLKAPY (71 aa).

Interacts with CUL3A.

It functions in the pathway protein modification; protein ubiquitination. Its function is as follows. May act as a substrate-specific adapter of an E3 ubiquitin-protein ligase complex (CUL3-RBX1-BTB) which mediates the ubiquitination and subsequent proteasomal degradation of target proteins. This Arabidopsis thaliana (Mouse-ear cress) protein is BTB/POZ domain-containing protein At1g01640.